The primary structure comprises 653 residues: Phospholipid-transporting ATPase VD (653 aa).

Topologically, residues 1–375 are cytoplasmic; sequence MACNLCYEAE…GHWCYTRLSN (375 aa). Residues Glu14, Phe56, Lys80, Arg124, Thr204, Gly205, Asp206, 259–266, Arg293, and Lys299 each bind ATP; that span reads GLIITGKT. A Mg(2+)-binding site is contributed by Asp319. ATP contacts are provided by Asn322 and Asp323. A Mg(2+)-binding site is contributed by Asp323. Residues 376–396 form a helical membrane-spanning segment; sequence MILYFFYKNVAYVNLLFWYQF. Residues 397-407 lie on the Exoplasmic loop side of the membrane; sequence FCGFSGTSMTD. A helical membrane pass occupies residues 408–428; the sequence is YWVLIFFNLLFTSAPPVIYGV. Over 429–458 the chain is Cytoplasmic; sequence LEKDVSAETLMQLPELYKSGQKSEAYLPHT. The helical transmembrane segment at 459 to 480 threads the bilayer; sequence FWITLLDAFYQSLVCFFVPYFT. Residues 481–487 lie on the Exoplasmic loop side of the membrane; the sequence is YQGSDID. The helical transmembrane segment at 488 to 510 threads the bilayer; that stretch reads IFAFGNPLNTAALFIILLHLIIE. Topologically, residues 511 to 516 are cytoplasmic; the sequence is SKSLTW. A helical membrane pass occupies residues 517-537; that stretch reads IHMLVITGSILSYFLFAIVFG. Residues 538 to 555 are Exoplasmic loop-facing; that stretch reads AMCVTCNPPSNPYWIMQE. A helical membrane pass occupies residues 556-580; it reads HVLDPVFYLVCILTTCIALLPRFVY. Residues 581-653 are Cytoplasmic-facing; that stretch reads RGAGKMNQVT…AFEMARPCKD (73 aa).

This sequence belongs to the cation transport ATPase (P-type) (TC 3.A.3) family. Type IV subfamily. As to quaternary structure, component of a P4-ATPase flippase complex which consists of a catalytic alpha subunit ATP10A and an accessory beta subunit TMEM30A. The cofactor is Mg(2+). In terms of processing, autophosphorylated at the conserved aspartate of the P-type ATPase signature sequence.

It is found in the cell membrane. Its subcellular location is the endoplasmic reticulum membrane. It carries out the reaction ATP + H2O + phospholipidSide 1 = ADP + phosphate + phospholipidSide 2.. It catalyses the reaction a beta-D-glucosyl-(1&lt;-&gt;1')-N-acylsphing-4-enine(out) + ATP + H2O = a beta-D-glucosyl-(1&lt;-&gt;1')-N-acylsphing-4-enine(in) + ADP + phosphate + H(+). In terms of biological role, catalytic component of a P4-ATPase flippase complex, which catalyzes the hydrolysis of ATP coupled to the transport of glucosylceramide (GlcCer) from the outer to the inner leaflet of the plasma membrane. The polypeptide is Phospholipid-transporting ATPase VD (ATP10D) (Macaca fascicularis (Crab-eating macaque)).